The chain runs to 124 residues: Fluoride-specific ion channel FluC (124 aa).

A run of 4 helical transmembrane segments spans residues 5 to 25, 36 to 56, 70 to 90, and 100 to 120; these read LVVF…NLAA, TMII…WFAV, TGIL…FLLM, and LYVL…LAVI. Gly-74 and Thr-77 together coordinate Na(+).

This sequence belongs to the fluoride channel Fluc/FEX (TC 1.A.43) family.

The protein localises to the cell inner membrane. The catalysed reaction is fluoride(in) = fluoride(out). Its activity is regulated as follows. Na(+) is not transported, but it plays an essential structural role and its presence is essential for fluoride channel function. Its function is as follows. Fluoride-specific ion channel. Important for reducing fluoride concentration in the cell, thus reducing its toxicity. This chain is Fluoride-specific ion channel FluC, found in Methylobacterium nodulans (strain LMG 21967 / CNCM I-2342 / ORS 2060).